Consider the following 137-residue polypeptide: Large ribosomal subunit protein uL16 (137 aa).

Positions 1 to 21 (MLSPKKVKFRKRQKGRLKGKA) are enriched in basic residues. The tract at residues 1-22 (MLSPKKVKFRKRQKGRLKGKAQ) is disordered.

It belongs to the universal ribosomal protein uL16 family. In terms of assembly, part of the 50S ribosomal subunit.

Its function is as follows. Binds 23S rRNA and is also seen to make contacts with the A and possibly P site tRNAs. The protein is Large ribosomal subunit protein uL16 of Maridesulfovibrio salexigens (strain ATCC 14822 / DSM 2638 / NCIMB 8403 / VKM B-1763) (Desulfovibrio salexigens).